The chain runs to 379 residues: Cathepsin B-like cysteine proteinase 6 (379 aa).

The signal sequence occupies residues 1-16 (MKTLLFLSCIVVAAYC). The propeptide occupies 17-104 (ACNDNLESVL…LSKTKDLDLD (88 aa)). Intrachain disulfides connect C118/C147, C130/C174, C166/C233, C167/C170, C203/C237, and C211/C223. C133 is an active-site residue. N196 carries N-linked (GlcNAc...) asparagine glycosylation. N201 carries N-linked (GlcNAc...) asparagine; atypical glycosylation. Catalysis depends on residues H305 and N325.

Belongs to the peptidase C1 family.

The polypeptide is Cathepsin B-like cysteine proteinase 6 (cpr-6) (Caenorhabditis elegans).